A 288-amino-acid chain; its full sequence is Mycothiol S-conjugate amidase (288 aa).

Residues histidine 12, aspartate 15, and histidine 142 each contribute to the Zn(2+) site.

It belongs to the MshB deacetylase family. Mca subfamily. Monomer. The cofactor is Zn(2+).

The catalysed reaction is mycothiol S-conjugate + H2O = an N-acetyl-L-cysteine-S-conjugate + 1D-myo-inositol 2-amino-2-deoxy-alpha-D-glucopyranoside. Partially inhibited by MSH when MSmB is used as substrate. Competitively inhibited by the GlcNAc-cyclohexyl derivative 5-(4-chlorophenyl)-N-((2R,3R,4R,5S,6R)-2-(cyclohexylthio)-tetrahydro-4,5-dihydroxy-6-(hydroxymethyl)-2H-pyran-3-yl)furan-2-carboxamide, which also inhibits MshB. Its function is as follows. A mycothiol (MSH, N-acetyl-cysteinyl-glucosaminyl-inositol) S-conjugate amidase, it recycles conjugated MSH to the N-acetyl cysteine conjugate and the MSH precursor. Involved in MSH-dependent detoxification of a number of alkylating agents and antibiotics. Activity is specific for the mycothiol moiety. Has a low but measurable deacetylation activity on GlcNAc-Ins (N-acetyl-glucosaminyl-inositol), and thus can also directly contribute to the production of MSH. The chain is Mycothiol S-conjugate amidase from Mycobacterium tuberculosis (strain ATCC 25618 / H37Rv).